A 229-amino-acid chain; its full sequence is Uracil-DNA glycosylase (229 aa).

D64 acts as the Proton acceptor in catalysis.

Belongs to the uracil-DNA glycosylase (UDG) superfamily. UNG family.

It is found in the cytoplasm. The enzyme catalyses Hydrolyzes single-stranded DNA or mismatched double-stranded DNA and polynucleotides, releasing free uracil.. Excises uracil residues from the DNA which can arise as a result of misincorporation of dUMP residues by DNA polymerase or due to deamination of cytosine. The polypeptide is Uracil-DNA glycosylase (Escherichia fergusonii (strain ATCC 35469 / DSM 13698 / CCUG 18766 / IAM 14443 / JCM 21226 / LMG 7866 / NBRC 102419 / NCTC 12128 / CDC 0568-73)).